Reading from the N-terminus, the 426-residue chain is Tetracenomycin polyketide synthase ketoacyl synthase alpha subunit (426 aa).

A Ketosynthase family 3 (KS3) domain is found at 6–420 (EKRVVITGIG…GFQSAAVLAR (415 aa)). Active-site for beta-ketoacyl synthase activity residues include cysteine 173, histidine 313, and histidine 350.

It belongs to the thiolase-like superfamily. Beta-ketoacyl-ACP synthases family. In terms of assembly, the tetracenomycin polyketide synthase (TCM PKS) is composed of a ketosynthase complex (TcmKL), an acyl carrier protein (TcmM), a cyclase (TcmN) and a probable second cyclase (TcmJ). TcmK and TcmL form a heterodimeric complex.

It carries out the reaction 10 malonyl-CoA + 8 H(+) = tetracenomycin F2 + 10 CO2 + 10 CoA + 2 H2O. It participates in antibiotic biosynthesis; tetracenomycin C biosynthesis. Involved in the biosynthesis of tetracenomycin C (TCM C). Part of a type II polyketide synthase (PKS) that catalyzes the synthesis of tetracenomycin F2 (TCM F2), a precursor of TCM C, from malonyl-CoA. TcmK and TcmL form a heterodimeric alpha-beta complex that catalyzes the condensation reactions between the growing acyl-enzyme chain and the malonyl-CoA extender units. The chain is Tetracenomycin polyketide synthase ketoacyl synthase alpha subunit from Streptomyces glaucescens.